We begin with the raw amino-acid sequence, 186 residues long: Dirigent protein 4 (186 aa).

The first 20 residues, 1 to 20 (MGKNLGLVVSFYLCITFALG), serve as a signal peptide directing secretion. Residues Asn67, Asn126, Asn169, and Asn180 are each glycosylated (N-linked (GlcNAc...) asparagine).

Belongs to the plant dirigent protein family. Homodimer.

The protein resides in the secreted. The protein localises to the extracellular space. It is found in the apoplast. In terms of biological role, dirigent proteins impart stereoselectivity on the phenoxy radical-coupling reaction, yielding optically active lignans from two molecules of coniferyl alcohol in the biosynthesis of lignans, flavonolignans, and alkaloids and thus plays a central role in plant secondary metabolism. This chain is Dirigent protein 4 (DIR4), found in Arabidopsis thaliana (Mouse-ear cress).